The sequence spans 151 residues: SsrA-binding protein (151 aa).

The disordered stretch occupies residues K131–K151.

The protein belongs to the SmpB family.

The protein localises to the cytoplasm. Required for rescue of stalled ribosomes mediated by trans-translation. Binds to transfer-messenger RNA (tmRNA), required for stable association of tmRNA with ribosomes. tmRNA and SmpB together mimic tRNA shape, replacing the anticodon stem-loop with SmpB. tmRNA is encoded by the ssrA gene; the 2 termini fold to resemble tRNA(Ala) and it encodes a 'tag peptide', a short internal open reading frame. During trans-translation Ala-aminoacylated tmRNA acts like a tRNA, entering the A-site of stalled ribosomes, displacing the stalled mRNA. The ribosome then switches to translate the ORF on the tmRNA; the nascent peptide is terminated with the 'tag peptide' encoded by the tmRNA and targeted for degradation. The ribosome is freed to recommence translation, which seems to be the essential function of trans-translation. This Rickettsia bellii (strain OSU 85-389) protein is SsrA-binding protein.